Reading from the N-terminus, the 147-residue chain is Hemoglobin subunit beta-2 (147 aa).

One can recognise a Globin domain in the interval 3–147 (EWTDSERAII…VVSALGRQYH (145 aa)). Residues histidine 64 and histidine 93 each contribute to the heme b site.

The protein belongs to the globin family. As to quaternary structure, hb 3 is a heterotetramer of two alpha-2 and two beta-2 chains. Red blood cells.

Functionally, involved in oxygen transport from gills to the various peripheral tissues. The protein is Hemoglobin subunit beta-2 (hbb2) of Boreogadus saida (Polar cod).